Here is a 590-residue protein sequence, read N- to C-terminus: Leucine-rich repeat transmembrane neuronal protein 4 (590 aa).

An N-terminal signal peptide occupies residues 1–30; that stretch reads MGFRLITQLKGMSVLLVLFPTLLLVMLTGA. One can recognise an LRRNT domain in the interval 31 to 59; sequence QRACPKNCRCDGKIVYCESHAFADIPENI. Residues 31 to 424 lie on the Extracellular side of the membrane; that stretch reads QRACPKNCRC…HEYEHVSFHK (394 aa). The N-linked (GlcNAc...) asparagine glycan is linked to Asn-58. 10 LRR repeats span residues 60-83, 84-107, 108-131, 132-155, 157-179, 180-203, 205-227, 228-251, 252-275, and 276-299; these read SGGS…QFAG, LNQL…AFQG, IRRL…TFHP, VPNL…QFKG, RKLI…VFQD, CRNL…AFAG, LKLK…HFPR, LFNL…LTWT, WSSL…TFKC, and LPNL…TVNA. Residue Asn-126 is glycosylated (N-linked (GlcNAc...) asparagine). A glycan (N-linked (GlcNAc...) asparagine) is linked at Asn-291. The region spanning 311–362 is the LRRCT domain; the sequence is NMWECSRSICPLFYWLKNFKGNKESTMICAGPKHIQGEKVSDAVETYNICSD. A helical membrane pass occupies residues 425–445; sequence IIAGSVALFLSVAMILLVIYV. The Cytoplasmic segment spans residues 446–590; it reads SWKRYPASMK…PAIYLERITN (145 aa).

This sequence belongs to the LRRTM family. Peripherally associated with AMPAR complex. AMPAR complex consists of an inner core made of 4 pore-forming GluA/GRIA proteins (GRIA1, GRIA2, GRIA3 and GRIA4) and 4 major auxiliary subunits arranged in a twofold symmetry. One of the two pairs of distinct binding sites is occupied either by CNIH2, CNIH3 or CACNG2, CACNG3. The other harbors CACNG2, CACNG3, CACNG4, CACNG8 or GSG1L. This inner core of AMPAR complex is complemented by outer core constituents binding directly to the GluA/GRIA proteins at sites distinct from the interaction sites of the inner core constituents. Outer core constituents include at least PRRT1, PRRT2, CKAMP44/SHISA9, FRRS1L and NRN1. The proteins of the inner and outer core serve as a platform for other, more peripherally associated AMPAR constituents, including LRRTM4. Alone or in combination, these auxiliary subunits control the gating and pharmacology of the AMPAR complex and profoundly impact their biogenesis and protein processing. As to expression, expressed in the brain (at protein level).

It is found in the cell membrane. It localises to the postsynaptic cell membrane. Its function is as follows. May play a role in the development and maintenance of the nervous system. Exhibits strong synaptogenic activity, restricted to excitatory presynaptic differentiation. The protein is Leucine-rich repeat transmembrane neuronal protein 4 (Lrrtm4) of Rattus norvegicus (Rat).